The primary structure comprises 303 residues: Glycine--tRNA ligase alpha subunit (303 aa).

It belongs to the class-II aminoacyl-tRNA synthetase family. As to quaternary structure, tetramer of two alpha and two beta subunits.

It localises to the cytoplasm. The enzyme catalyses tRNA(Gly) + glycine + ATP = glycyl-tRNA(Gly) + AMP + diphosphate. The protein is Glycine--tRNA ligase alpha subunit (glyQ) of Escherichia coli (strain K12).